Consider the following 56-residue polypeptide: FAAVSVDCSEYPKPACTLEYVPICGSDNKTYGNKCNFCNAVVESNGTLTLSHFGKC.

The region spanning 6–56 (VDCSEYPKPACTLEYVPICGSDNKTYGNKCNFCNAVVESNGTLTLSHFGKC) is the Kazal-like domain. Cystine bridges form between Cys-8/Cys-38, Cys-16/Cys-35, and Cys-24/Cys-56. A glycan (N-linked (GlcNAc...) asparagine) is linked at Asn-45.

Its subcellular location is the secreted. The sequence is that of Ovomucoid from Cyrtonyx montezumae (Montezuma quail).